The following is a 95-amino-acid chain: Putative septation protein SpoVG (95 aa).

Belongs to the SpoVG family.

Its function is as follows. Could be involved in septation. This Brevibacillus brevis (strain 47 / JCM 6285 / NBRC 100599) protein is Putative septation protein SpoVG.